The following is a 235-amino-acid chain: NAD(P)H-quinone oxidoreductase subunit K, chloroplastic (235 aa).

Cys-43, Cys-44, Cys-108, and Cys-139 together coordinate [4Fe-4S] cluster.

It belongs to the complex I 20 kDa subunit family. NDH is composed of at least 16 different subunits, 5 of which are encoded in the nucleus. The cofactor is [4Fe-4S] cluster.

It is found in the plastid. The protein localises to the chloroplast thylakoid membrane. The catalysed reaction is a plastoquinone + NADH + (n+1) H(+)(in) = a plastoquinol + NAD(+) + n H(+)(out). It carries out the reaction a plastoquinone + NADPH + (n+1) H(+)(in) = a plastoquinol + NADP(+) + n H(+)(out). In terms of biological role, NDH shuttles electrons from NAD(P)H:plastoquinone, via FMN and iron-sulfur (Fe-S) centers, to quinones in the photosynthetic chain and possibly in a chloroplast respiratory chain. The immediate electron acceptor for the enzyme in this species is believed to be plastoquinone. Couples the redox reaction to proton translocation, and thus conserves the redox energy in a proton gradient. The protein is NAD(P)H-quinone oxidoreductase subunit K, chloroplastic of Ipomoea purpurea (Common morning glory).